A 562-amino-acid polypeptide reads, in one-letter code: Probable malate:quinone oxidoreductase (562 aa).

The segment at 535 to 562 (SATPADPTIAPKNQHSTTYNANSEMQAL) is disordered. A compositionally biased stretch (polar residues) spans 545 to 562 (PKNQHSTTYNANSEMQAL).

The protein belongs to the MQO family. The cofactor is FAD.

It carries out the reaction (S)-malate + a quinone = a quinol + oxaloacetate. It functions in the pathway carbohydrate metabolism; tricarboxylic acid cycle; oxaloacetate from (S)-malate (quinone route): step 1/1. The protein is Probable malate:quinone oxidoreductase of Xylella fastidiosa (strain M23).